Consider the following 93-residue polypeptide: Protein FptB (93 aa).

A signal peptide spans 1–25; sequence MPRQSGFGWAWRVPLALAGSLAAAT. 2 helical membrane-spanning segments follow: residues 44-64 and 71-91; these read LYAG…GGLL and FAWR…LLAG.

The protein resides in the cell membrane. Functionally, may play some role in transport of Fe(3+)-pyochelin. The sequence is that of Protein FptB (fptB) from Pseudomonas aeruginosa (strain ATCC 15692 / DSM 22644 / CIP 104116 / JCM 14847 / LMG 12228 / 1C / PRS 101 / PAO1).